The sequence spans 362 residues: Peptide chain release factor 1 (362 aa).

Gln-235 is subject to N5-methylglutamine.

It belongs to the prokaryotic/mitochondrial release factor family. Post-translationally, methylated by PrmC. Methylation increases the termination efficiency of RF1.

Its subcellular location is the cytoplasm. Its function is as follows. Peptide chain release factor 1 directs the termination of translation in response to the peptide chain termination codons UAG and UAA. This chain is Peptide chain release factor 1, found in Buchnera aphidicola subsp. Baizongia pistaciae (strain Bp).